We begin with the raw amino-acid sequence, 348 residues long: Phenylalanine--tRNA ligase alpha subunit (348 aa).

E259 is a Mg(2+) binding site.

It belongs to the class-II aminoacyl-tRNA synthetase family. Phe-tRNA synthetase alpha subunit type 1 subfamily. As to quaternary structure, tetramer of two alpha and two beta subunits. Mg(2+) serves as cofactor.

Its subcellular location is the cytoplasm. It catalyses the reaction tRNA(Phe) + L-phenylalanine + ATP = L-phenylalanyl-tRNA(Phe) + AMP + diphosphate + H(+). This chain is Phenylalanine--tRNA ligase alpha subunit, found in Lacticaseibacillus casei (strain BL23) (Lactobacillus casei).